Here is a 389-residue protein sequence, read N- to C-terminus: Na(+)/H(+) antiporter NhaA (389 aa).

Helical transmembrane passes span 17-37, 59-79, 95-115, 124-144, 154-174, 177-197, 213-233, 261-281, 287-307, 328-348, and 363-383; these read ILLLVAVVLAMLMANSPLAGL, LLLWINDGLMALFFLLIGLEV, SLPTFAAIGGMLVPAGIYLLF, VGWAIPAATDIAFALGIMALL, VFLLALAIIDDLGVIVIIALF, SDLSTISLIIASIAIVGLVAL, LVLWVAVLKSGVHATLAGVII, FLILPVFAFANAGVALGNMSL, PVPVGIALGLMLGKPIGVMLF, IAPVAAMCGIGFTMSMFIASL, and LGTLIGSILAALIGYFWLSKV.

The protein belongs to the NhaA Na(+)/H(+) (TC 2.A.33) antiporter family.

The protein localises to the cell inner membrane. It catalyses the reaction Na(+)(in) + 2 H(+)(out) = Na(+)(out) + 2 H(+)(in). In terms of biological role, na(+)/H(+) antiporter that extrudes sodium in exchange for external protons. The sequence is that of Na(+)/H(+) antiporter NhaA from Shewanella sp. (strain ANA-3).